The sequence spans 136 residues: Basic phospholipase A2 Tgc-K49 (136 aa).

The N-terminal stretch at 1-15 is a signal peptide; that stretch reads MRTLWIVAVLLVGEG. Intrachain disulfides connect cysteine 41–cysteine 130, cysteine 43–cysteine 59, cysteine 58–cysteine 110, cysteine 64–cysteine 136, cysteine 65–cysteine 103, cysteine 72–cysteine 96, and cysteine 90–cysteine 101. Histidine 62 is an active-site residue. Residue aspartate 104 is part of the active site.

The protein belongs to the phospholipase A2 family. Group II subfamily. K49 sub-subfamily. As to expression, expressed by the venom gland.

It localises to the secreted. It catalyses the reaction a 1,2-diacyl-sn-glycero-3-phosphocholine + H2O = a 1-acyl-sn-glycero-3-phosphocholine + a fatty acid + H(+). Its function is as follows. PLA2 catalyzes the calcium-dependent hydrolysis of the 2-acyl groups in 3-sn-phosphoglycerides. The polypeptide is Basic phospholipase A2 Tgc-K49 (Trimeresurus gracilis (Kikuchi habu)).